The sequence spans 948 residues: MAQQYQPGQRWISDSEAELGLGTVLAQDGRLLTVLYPATGETRQYALRNAPLTRVRFSPGDSITHFEGWKMTVQQVDDVDGLMVYHGLNAQNEAVTLPETQLSNFIQFRLASDRLFAGQIDPLAWFSLRYHTLEHTSRQLQSALWGLGGVRAQPIAHQLHIAREVADRIAPRVLLADEVGLGKTIEAGLVIHRQLLSGRANRVLILVPENLQHQWLVEMRRRFNLQVALFDEERFIESDATNPFEDTQLALVALEWLVDDEKAQDALFAAGWDLMVVDEAHHLVWHEDKVSPEYSLVEQLAEVIPGVLLLTATPEQLGQDSHFARLRLLDPNRFHDLAAFRAESENYRPVAEAVQELLDKGRLSPAAHKTIHGFLGNEGEALLTAVNDGDTEASARLVRELLDRHGTGRVLFRNTRAAVQGFPERKLHPYPLPCPDEYLELPLGEHAELYPEVSFQAQPDASEEERWWKFDPRVEWLIDQLKMLKRTKVLVICAHAETAMDLEDALRVRSGIPATVFHEGMNILERDRAAAYFADEEFGAQVLICSEIGSEGRNFQFAHHLVLFDLPSHPDLLEQRIGRLDRIGQKHIIELHVPYLETSPQERLFQWYHEALNAFLNTCPTGNALQHQFGPRLLPLLEEADDGEWQALIDEARTERERLEAELHTGRDRLLELNSGGAGEGEALVEAILEQDDQFALPIYMETLFDAFGIDSEDHSENALILKPSEKMLDASFPLGDDEGVTITYDRNQALSREDMQFITWEHPMVQGGMDLVLSGSMGNTAVALIKNKALKPGTVLLELLYVSEVVAPRSLQLGRYLPPAALRCLLDANGNDLSSRVAFETLNDQLESVPRASANKFIQAQRDQLTPRINAGEDKVTPRHAERVAEARRRLAADTDEELARLTALQAVNPTVRDSELDALRKQREQGLAMLDKAALRLEAIRVLVAG.

Residues 164–332 form the Helicase ATP-binding domain; the sequence is EVADRIAPRV…FARLRLLDPN (169 aa). 177-184 provides a ligand contact to ATP; the sequence is DEVGLGKT. Residues 278–281 carry the DEAH box motif; that stretch reads DEAH. One can recognise a Helicase C-terminal domain in the interval 473–627; that stretch reads RVEWLIDQLK…TCPTGNALQH (155 aa).

This sequence belongs to the SNF2/RAD54 helicase family. RapA subfamily. In terms of assembly, interacts with the RNAP. Has a higher affinity for the core RNAP than for the holoenzyme. Its ATPase activity is stimulated by binding to RNAP.

In terms of biological role, transcription regulator that activates transcription by stimulating RNA polymerase (RNAP) recycling in case of stress conditions such as supercoiled DNA or high salt concentrations. Probably acts by releasing the RNAP, when it is trapped or immobilized on tightly supercoiled DNA. Does not activate transcription on linear DNA. Probably not involved in DNA repair. This Pseudomonas fluorescens (strain Pf0-1) protein is RNA polymerase-associated protein RapA.